Consider the following 100-residue polypeptide: Aspartyl/glutamyl-tRNA(Asn/Gln) amidotransferase subunit C (100 aa).

The protein belongs to the GatC family. As to quaternary structure, heterotrimer of A, B and C subunits.

It catalyses the reaction L-glutamyl-tRNA(Gln) + L-glutamine + ATP + H2O = L-glutaminyl-tRNA(Gln) + L-glutamate + ADP + phosphate + H(+). The enzyme catalyses L-aspartyl-tRNA(Asn) + L-glutamine + ATP + H2O = L-asparaginyl-tRNA(Asn) + L-glutamate + ADP + phosphate + 2 H(+). Allows the formation of correctly charged Asn-tRNA(Asn) or Gln-tRNA(Gln) through the transamidation of misacylated Asp-tRNA(Asn) or Glu-tRNA(Gln) in organisms which lack either or both of asparaginyl-tRNA or glutaminyl-tRNA synthetases. The reaction takes place in the presence of glutamine and ATP through an activated phospho-Asp-tRNA(Asn) or phospho-Glu-tRNA(Gln). This chain is Aspartyl/glutamyl-tRNA(Asn/Gln) amidotransferase subunit C, found in Streptococcus equi subsp. equi (strain 4047).